We begin with the raw amino-acid sequence, 416 residues long: Signal recognition particle receptor FtsY (416 aa).

Basic residues predominate over residues 1–10 (MFSFFRRKKK). The disordered stretch occupies residues 1–24 (MFSFFRRKKKQETPALEEAQVQET). Residues 224–231 (GINGAGKT), 304–308 (DTAGR), and 368–371 (TKLD) contribute to the GTP site.

The protein belongs to the GTP-binding SRP family. FtsY subfamily. Part of the signal recognition particle protein translocation system, which is composed of SRP and FtsY. SRP is a ribonucleoprotein composed of Ffh and a 4.5S RNA molecule. Mg(2+) is required as a cofactor.

It is found in the cell membrane. The protein resides in the cytoplasm. It catalyses the reaction GTP + H2O = GDP + phosphate + H(+). Its function is as follows. Involved in targeting and insertion of nascent membrane proteins into the cytoplasmic membrane. Acts as a receptor for the complex formed by the signal recognition particle (SRP) and the ribosome-nascent chain (RNC). Interaction with SRP-RNC leads to the transfer of the RNC complex to the Sec translocase for insertion into the membrane, the hydrolysis of GTP by both Ffh and FtsY, and the dissociation of the SRP-FtsY complex into the individual components. The polypeptide is Signal recognition particle receptor FtsY (Neisseria gonorrhoeae).